Reading from the N-terminus, the 323-residue chain is CYFIP-related Rac1 interactor A (323 aa).

It belongs to the CYRI family. As to quaternary structure, interacts with RAC1 (GTP-bound form preferentially).

It is found in the membrane. May negatively regulate RAC1 signaling and RAC1-driven cytoskeletal remodeling. May regulate chemotaxis, cell migration and epithelial polarization by controlling the polarity, plasticity, duration and extent of protrusions. The sequence is that of CYFIP-related Rac1 interactor A (CYRIA) from Bos taurus (Bovine).